Here is a 30-residue protein sequence, read N- to C-terminus: Cyclotide cter-P (30 aa).

A cross-link (cyclopeptide (Gly-Asn)) is located at residues 1 to 30 (GIPCGESCVFIPCITAAIGCSCKSKVCYRN). 3 disulfide bridges follow: Cys4–Cys20, Cys8–Cys22, and Cys13–Cys27.

Post-translationally, this is a cyclic peptide.

The protein localises to the secreted. Its function is as follows. Probably participates in a plant defense mechanism. The sequence is that of Cyclotide cter-P from Clitoria ternatea (Butterfly pea).